Here is a 304-residue protein sequence, read N- to C-terminus: GTPase Era (304 aa).

Residues 11–179 (YCGFIAIVGR…QKIVRKSLRE (169 aa)) form the Era-type G domain. Residues 19–26 (GRPNVGKS) are G1. 19-26 (GRPNVGKS) is a GTP binding site. Residues 45 to 49 (QTTRH) form a G2 region. Residues 66-69 (DTPG) are G3. GTP is bound by residues 66-70 (DTPGL) and 128-131 (NKVD). Residues 128-131 (NKVD) form a G4 region. A G5 region spans residues 158–160 (ISA). Residues 210 to 287 (TGEELPYSVT…HLELWVKVKA (78 aa)) enclose the KH type-2 domain.

This sequence belongs to the TRAFAC class TrmE-Era-EngA-EngB-Septin-like GTPase superfamily. Era GTPase family. As to quaternary structure, monomer.

The protein resides in the cytoplasm. The protein localises to the cell inner membrane. Functionally, an essential GTPase that binds both GDP and GTP, with rapid nucleotide exchange. Plays a role in 16S rRNA processing and 30S ribosomal subunit biogenesis and possibly also in cell cycle regulation and energy metabolism. This is GTPase Era from Haemophilus ducreyi (strain 35000HP / ATCC 700724).